Consider the following 384-residue polypeptide: Spermatogenesis-associated protein 32 (384 aa).

The disordered stretch occupies residues 23–60; it reads RDDLSQHQIQEEQELEADMLEQKPQLQVDLDLDPDPDP. Phosphoserine occurs at positions 167 and 170. Disordered regions lie at residues 211–232, 284–310, and 340–366; these read DAHS…SSDL, VEER…LKSW, and LLQP…EKEN. The span at 214–231 shows a compositional bias: low complexity; sequence SAPPTTSSQAPSPLLSSD. The segment covering 353–366 has biased composition (basic and acidic residues); the sequence is SKEDSVPPGKEKEN.

As to quaternary structure, interacts with syntaxin-1 and ACTB. In terms of tissue distribution, detected in testis, and on the acrosomal cap of spermatids.

The sequence is that of Spermatogenesis-associated protein 32 (SPATA32) from Homo sapiens (Human).